We begin with the raw amino-acid sequence, 395 residues long: FAD-dependent monooxygenase cctM (395 aa).

Positions 1–23 (MEPGTDVRRVLVIGAGAAGLLIA) are cleaved as a signal peptide. 3 residues coordinate FAD: Glu-37, Gly-52, and Arg-112. N-linked (GlcNAc...) asparagine glycans are attached at residues Asn-138 and Asn-298. Asp-306 is an FAD binding site.

The protein belongs to the paxM FAD-dependent monooxygenase family. The cofactor is FAD.

The protein operates within mycotoxin biosynthesis. In terms of biological role, FAD-dependent monooxygenase; part of the gene cluster that mediates the biosynthesis of the mycotoxin cyclochlorotine, a hepatotoxic and carcinogenic cyclic chlorinated pentapeptide. The function of cctM within the pathway, if any, remains undetermined. The NRPS cctN initially catalyzes the condensation of L-serine (Ser), Pro, L-2-aminobutyrate (2Abu), Ser, and beta-Phe in this order to produce isocyclotine. After the dichlorination of Pro2 catalyzed by cctP2 to produce isocyclochlorotine, the cctO-mediated transacylation of isocyclochlorotine can furnish cyclochlorotine. The subsequent hydroxylation of cyclochlorotine by cctR yields hydroxycyclochlorotine as the final product. CctP1 probably acts as a phenylalanine aminomutase and provides the uncommon building block beta-Phe. Furthermore, 2Abu can be synthesized from threonine by one of the threonine dehydratases and transaminases localized outside of the cluster. The functions of the remaining proteins encoded by the cluster, cctM and cctT, have not been identified yet. The chain is FAD-dependent monooxygenase cctM from Talaromyces islandicus (Penicillium islandicum).